The chain runs to 63 residues: Progonadoliberin-1 (63 aa).

Pyrrolidone carboxylic acid is present on Q1. Position 10 is a glycine amide (G10).

It belongs to the GnRH family. In terms of processing, the precursor is cleaved by ACE, which removes the Gly-Lys-Arg peptide at the C-terminus, leading to mature hormone. The mature form of Gonadoliberin-1 is also cleaved and degraded by ACE.

It is found in the secreted. Its function is as follows. Stimulates the secretion of gonadotropins; it stimulates the secretion of both luteinizing and follicle-stimulating hormones. The polypeptide is Progonadoliberin-1 (GNRH1) (Mesocricetus auratus (Golden hamster)).